Here is an 81-residue protein sequence, read N- to C-terminus: Short neurotoxin 1 (81 aa).

The signal sequence occupies residues 1 to 21 (MKTLLLTLVVVTIVCLDLGYT). 4 disulfide bridges follow: C24-C43, C38-C60, C62-C73, and C74-C79.

Belongs to the three-finger toxin family. Short-chain subfamily. Type I alpha-neurotoxin sub-subfamily. In terms of tissue distribution, expressed by the venom gland.

The protein localises to the secreted. Binds to muscle nicotinic acetylcholine receptor (nAChR) and inhibit acetylcholine from binding to the receptor, thereby impairing neuromuscular transmission. This chain is Short neurotoxin 1, found in Cryptophis nigrescens (Eastern small-eyed snake).